Reading from the N-terminus, the 30-residue chain is Vitri peptide A (30 aa).

The cyclopeptide (Gly-Asn) cross-link spans 1-30 (GIPCGESCVWIPCITSAIGCSCKSKVCYRN). Cystine bridges form between C4–C20, C8–C22, and C13–C27.

In terms of processing, this is a cyclic peptide.

Probably participates in a plant defense mechanism. Has strong cytotoxic activity against human lymphoma U-937 GTB and human myeloma RPMI-8226/s cell lines. The protein is Vitri peptide A of Viola arvensis (European field pansy).